A 362-amino-acid polypeptide reads, in one-letter code: Carbamoyl phosphate synthase small chain (362 aa).

Positions 1–172 (MKAFLVLDNG…SKYIFGTHTG (172 aa)) are CPSase. 3 residues coordinate L-glutamine: Ser-45, Gly-224, and Gly-226. The region spanning 176–362 (KLAVYDYGVK…YDLVEKTKKG (187 aa)) is the Glutamine amidotransferase type-1 domain. The active-site Nucleophile is Cys-252. The L-glutamine site is built by Leu-253, Gln-256, Asn-294, Gly-296, and Phe-297. Active-site residues include His-335 and Glu-337.

Belongs to the CarA family. In terms of assembly, composed of two chains; the small (or glutamine) chain promotes the hydrolysis of glutamine to ammonia, which is used by the large (or ammonia) chain to synthesize carbamoyl phosphate. Tetramer of heterodimers (alpha,beta)4.

It carries out the reaction hydrogencarbonate + L-glutamine + 2 ATP + H2O = carbamoyl phosphate + L-glutamate + 2 ADP + phosphate + 2 H(+). The catalysed reaction is L-glutamine + H2O = L-glutamate + NH4(+). Its pathway is amino-acid biosynthesis; L-arginine biosynthesis; carbamoyl phosphate from bicarbonate: step 1/1. It functions in the pathway pyrimidine metabolism; UMP biosynthesis via de novo pathway; (S)-dihydroorotate from bicarbonate: step 1/3. Small subunit of the glutamine-dependent carbamoyl phosphate synthetase (CPSase). CPSase catalyzes the formation of carbamoyl phosphate from the ammonia moiety of glutamine, carbonate, and phosphate donated by ATP, constituting the first step of 2 biosynthetic pathways, one leading to arginine and/or urea and the other to pyrimidine nucleotides. The small subunit (glutamine amidotransferase) binds and cleaves glutamine to supply the large subunit with the substrate ammonia. The sequence is that of Carbamoyl phosphate synthase small chain from Leptospira interrogans serogroup Icterohaemorrhagiae serovar Lai (strain 56601).